Here is a 261-residue protein sequence, read N- to C-terminus: MNYFRVKIAYKGTHYFGWQAQSIDTLHEEKPTVEGTILNALKKITNYQPCTVSGASRTDGGVHARGQIAKITISQKISPEHLLLGLNSLLPTDIRILECVPSTKEYQASRGSVSKEYHYYFIASPVDNVATSDIALHLPIDSIGPDDLALLRSACRLFVGRHDFYNFSSRGSGTSFREIFYCDIHRANFSPLANDMFYLKIIGDGFLKYMIRYIMGALLELVRGRIVLDDISLYLQQHQEDKLSPRAKAKGLHLIRIEGPK.

Asp59 acts as the Nucleophile in catalysis. Residue Tyr117 participates in substrate binding.

Belongs to the tRNA pseudouridine synthase TruA family. Homodimer.

It catalyses the reaction uridine(38/39/40) in tRNA = pseudouridine(38/39/40) in tRNA. Functionally, formation of pseudouridine at positions 38, 39 and 40 in the anticodon stem and loop of transfer RNAs. This is tRNA pseudouridine synthase A 2 from Desulfotalea psychrophila (strain LSv54 / DSM 12343).